The following is a 186-amino-acid chain: Trafficking protein particle complex subunit 5 (186 aa).

It belongs to the TRAPP small subunits family. BET3 subfamily. Part of the multisubunit TRAPP (transport protein particle) complex.

The protein resides in the golgi apparatus. It is found in the cis-Golgi network. It localises to the endoplasmic reticulum. May play a role in vesicular transport from endoplasmic reticulum to Golgi. This chain is Trafficking protein particle complex subunit 5 (trappc5), found in Dictyostelium discoideum (Social amoeba).